A 712-amino-acid polypeptide reads, in one-letter code: Patatin-like phospholipase domain-containing protein AFUA_1G04970 (712 aa).

The span at M1–Y13 shows a compositional bias: basic and acidic residues. A disordered region spans residues M1–D20. Residues W85–T105 form a helical membrane-spanning segment. The PNPLA domain occupies L275–N466. A GXSXG motif is present at residues G306–G310. The active-site Nucleophile is S308. D453 acts as the Proton acceptor in catalysis. The interval R628 to E688 is disordered. Basic and acidic residues-rich tracts occupy residues D632–D646 and R652–E664. Residues D667–P676 are compositionally biased toward polar residues. Positions H677–E688 are enriched in basic and acidic residues.

The protein belongs to the PLPL family.

It is found in the membrane. Its function is as follows. Probable lipid hydrolase. This Aspergillus fumigatus (strain ATCC MYA-4609 / CBS 101355 / FGSC A1100 / Af293) (Neosartorya fumigata) protein is Patatin-like phospholipase domain-containing protein AFUA_1G04970.